The primary structure comprises 118 residues: Urease subunit beta (118 aa).

It belongs to the urease beta subunit family. As to quaternary structure, heterotrimer of UreA (gamma), UreB (beta) and UreC (alpha) subunits. Three heterotrimers associate to form the active enzyme.

It is found in the cytoplasm. The catalysed reaction is urea + 2 H2O + H(+) = hydrogencarbonate + 2 NH4(+). The protein operates within nitrogen metabolism; urea degradation; CO(2) and NH(3) from urea (urease route): step 1/1. This chain is Urease subunit beta, found in Aliivibrio fischeri (strain MJ11) (Vibrio fischeri).